The primary structure comprises 658 residues: Glycogen debranching enzyme (658 aa).

Residue Asp336 is the Nucleophile of the active site. Residue Glu371 is the Proton donor of the active site. Positions 459–486 are disordered; the sequence is EANGEENRDGTNSNYSDNNGKEGLGGPL.

The protein belongs to the glycosyl hydrolase 13 family.

It catalyses the reaction Hydrolysis of (1-&gt;6)-alpha-D-glucosidic linkages to branches with degrees of polymerization of three or four glucose residues in limit dextrin.. It participates in glycan degradation; glycogen degradation. Functionally, removes maltotriose and maltotetraose chains that are attached by 1,6-alpha-linkage to the limit dextrin main chain, generating a debranched limit dextrin. The polypeptide is Glycogen debranching enzyme (Salmonella gallinarum (strain 287/91 / NCTC 13346)).